Reading from the N-terminus, the 844-residue chain is Protein translocase subunit SecA (844 aa).

ATP is bound by residues Gln87, 105–109 (GEGKT), and Asp495. A compositionally biased stretch (basic and acidic residues) spans 783 to 800 (QAPPEELKQEFKHKEEPK). The segment at 783-844 (QAPPEELKQE…GQKYKKCCGA (62 aa)) is disordered. The segment covering 802 to 811 (LNYSGAQKET) has biased composition (polar residues). Residues 816–826 (PERRGEPKVGR) show a composition bias toward basic and acidic residues. Residues Cys830, Cys832, Cys841, and Cys842 each coordinate Zn(2+).

It belongs to the SecA family. As to quaternary structure, monomer and homodimer. Part of the essential Sec protein translocation apparatus which comprises SecA, SecYEG and auxiliary proteins SecDF-YajC and YidC. The cofactor is Zn(2+).

Its subcellular location is the cell inner membrane. It localises to the cytoplasm. The enzyme catalyses ATP + H2O + cellular proteinSide 1 = ADP + phosphate + cellular proteinSide 2.. Functionally, part of the Sec protein translocase complex. Interacts with the SecYEG preprotein conducting channel. Has a central role in coupling the hydrolysis of ATP to the transfer of proteins into and across the cell membrane, serving as an ATP-driven molecular motor driving the stepwise translocation of polypeptide chains across the membrane. In Nitratidesulfovibrio vulgaris (strain DSM 19637 / Miyazaki F) (Desulfovibrio vulgaris), this protein is Protein translocase subunit SecA.